The sequence spans 389 residues: Acetylornithine aminotransferase (389 aa).

Residues 104–105 (GT) and Phe131 contribute to the pyridoxal 5'-phosphate site. Residue Arg134 coordinates N(2)-acetyl-L-ornithine. Residue 216-219 (DEVQ) participates in pyridoxal 5'-phosphate binding. Position 245 is an N6-(pyridoxal phosphate)lysine (Lys245). Ser273 provides a ligand contact to N(2)-acetyl-L-ornithine. Thr274 serves as a coordination point for pyridoxal 5'-phosphate.

The protein belongs to the class-III pyridoxal-phosphate-dependent aminotransferase family. ArgD subfamily. As to quaternary structure, homodimer. Pyridoxal 5'-phosphate is required as a cofactor.

It localises to the cytoplasm. The catalysed reaction is N(2)-acetyl-L-ornithine + 2-oxoglutarate = N-acetyl-L-glutamate 5-semialdehyde + L-glutamate. Its pathway is amino-acid biosynthesis; L-arginine biosynthesis; N(2)-acetyl-L-ornithine from L-glutamate: step 4/4. This Methanopyrus kandleri (strain AV19 / DSM 6324 / JCM 9639 / NBRC 100938) protein is Acetylornithine aminotransferase.